The chain runs to 484 residues: N-succinylglutamate 5-semialdehyde dehydrogenase (484 aa).

221-226 (GSAAAG) lines the NAD(+) pocket. Active-site residues include E244 and C278.

The protein belongs to the aldehyde dehydrogenase family. AstD subfamily.

It catalyses the reaction N-succinyl-L-glutamate 5-semialdehyde + NAD(+) + H2O = N-succinyl-L-glutamate + NADH + 2 H(+). It functions in the pathway amino-acid degradation; L-arginine degradation via AST pathway; L-glutamate and succinate from L-arginine: step 4/5. In terms of biological role, catalyzes the NAD-dependent reduction of succinylglutamate semialdehyde into succinylglutamate. The polypeptide is N-succinylglutamate 5-semialdehyde dehydrogenase (Caulobacter sp. (strain K31)).